The chain runs to 3412 residues: Genome polyprotein (3412 aa).

Residues 1–104 lie on the Cytoplasmic side of the membrane; it reads MSGRKAQGKT…LSSRKRRSNE (104 aa). Positions 38–72 are hydrophobic; homodimerization of capsid protein C; it reads PGPSRGVQGFIFFFLFNILTGKKLTAHLKKLWRML. A propeptide spans 102-121 (ER anchor for the capsid protein C, removed in mature form by serine protease NS3); that stretch reads SNEMALFPLLLLGLLALSGG. The chain crosses the membrane as a helical span at residues 105-125; that stretch reads MALFPLLLLGLLALSGGVTLV. Residues 126 to 244 lie on the Extracellular side of the membrane; it reads RKNRWLLLNV…GERQLQKIER (119 aa). N-linked (GlcNAc...) asparagine; by host glycans are attached at residues Asn134 and Asn150. The chain crosses the membrane as a helical span at residues 245–265; the sequence is WLVRNPFFAVTALAIAYLVGN. At 266–270 the chain is on the cytoplasmic side; sequence NTTQR. The helical transmembrane segment at 271-285 threads the bilayer; it reads VVIALLVLAVGPAYS. Over 286-730 the chain is Extracellular; sequence AHCIGITDRD…TVFGSAFQGL (445 aa). 8 disulfides stabilise this stretch: Cys288–Cys315, Cys345–Cys401, Cys345–Cys406, Cys359–Cys390, Cys377–Cys401, Cys377–Cys406, Cys467–Cys568, and Cys585–Cys615. The interval 383–396 is fusion peptide; that stretch reads DRGWGNGCGLFGKG. Residues 731-751 traverse the membrane as a helical segment; sequence FGGLSWITKVIMGAVLIWVGI. Topologically, residues 752–757 are extracellular; the sequence is NTRNMT. Residues 758-778 traverse the membrane as a helical segment; the sequence is MSMSMILVGVIMMFLSLGVGA. The Extracellular segment spans residues 779–1132; that stretch reads DQGCAVNFGK…LVRSWVTAGE (354 aa). Disulfide bonds link Cys782/Cys793, Cys833/Cys921, Cys957/Cys1002, Cys1058/Cys1107, Cys1069/Cys1091, and Cys1090/Cys1094. N-linked (GlcNAc...) asparagine; by host glycosylation is found at Asn908 and Asn986. The helical transmembrane segment at 1133–1153 threads the bilayer; that stretch reads VHAVPFGLVSMMIAMEVVLRR. At 1154–1201 the chain is on the cytoplasmic side; it reads RQGPKQMLVGGVVLLGAMLVGQVTVLDLVKFVVAVGLHFHEINNGGDA. The chain crosses the membrane as a helical span at residues 1202–1222; that stretch reads MYMALIASFSIRPGLLMGFGL. Residues 1223-1287 lie on the Lumenal side of the membrane; it reads RTLWSPRERL…ILPLMALMTP (65 aa). A helical membrane pass occupies residues 1288–1308; the sequence is MTMHEVRMATMLFCTVVIIGV. Residues 1309–1355 are Cytoplasmic-facing; sequence LHQNSKDTSMQKTIPIVALTLTSYMGLTQPFLGLCAYMSTQVFGRRS. The chain crosses the membrane as a helical span at residues 1356–1376; the sequence is IPVNEALAAAGLVGVLAGLAF. The Lumenal portion of the chain corresponds to 1377–1378; it reads QD. The chain crosses the membrane as a helical span at residues 1379 to 1399; it reads MENFLGPIAVGGILMMLVSVA. At 1400-1456 the chain is on the cytoplasmic side; it reads GRVDGLELKKLGEISWEEEAEISGSSSRYDVALSEQGEFKLLSEDKVPWDQIVMTSL. The interacts with and activates NS3 protease stretch occupies residues 1407 to 1446; that stretch reads LKKLGEISWEEEAEISGSSSRYDVALSEQGEFKLLSEDKV. The helical intramembrane region spans 1457–1477; it reads ALVGAAIHPFALLLVLGGWIL. At 1478 to 2157 the chain is on the cytoplasmic side; the sequence is HIKGARRSGD…RNALSMMPEA (680 aa). The Peptidase S7 domain maps to 1485 to 1665; that stretch reads SGDVLWDIPT…ELKEESKEEL (181 aa). Catalysis depends on charge relay system; for serine protease NS3 activity residues His1537, Asp1561, and Ser1622. Positions 1669-1825 constitute a Helicase ATP-binding domain; that stretch reads PTMLKKGMTT…HSNGEIEDVQ (157 aa). Residues 1673 to 1676 form an important for RNA-binding region; it reads KKGM. ATP is bound at residue 1682 to 1689; that stretch reads FHPGAGKT. Residues 1773–1776 carry the DEAH box motif; it reads DEAH. The region spanning 1836–1997 is the Helicase C-terminal domain; the sequence is GHEWILADKR…VRGGMVAPLY (162 aa). Lys1877 carries the post-translational modification N6-acetyllysine; by host. Positions 1942-1963 are disordered; that stretch reads AAQRRGRIGRNPNRDGDSYYYS. The helical transmembrane segment at 2158–2178 threads the bilayer; sequence MTIVMLFLLAGLLTSGAVIFF. The Lumenal portion of the chain corresponds to 2179–2186; it reads MSPKGMSR. An intramembrane region (helical) is located at residues 2187 to 2207; the sequence is MSMAMGTMAGSGYLMFLGGVK. Residues 2208–2209 are Lumenal-facing; sequence PT. Residues 2210–2230 traverse the membrane as a helical segment; that stretch reads HISYVMLIFFVLMVVVIPEPG. Residues 2231–2241 lie on the Cytoplasmic side of the membrane; sequence QQRTIQDNQVA. Residues 2242–2262 form a helical membrane-spanning segment; sequence YLIIGILTLLSVVAANELGML. The Lumenal portion of the chain corresponds to 2263–2293; the sequence is EKTKEDFFGKRDITTPSGAIPWSWPDLDLKP. Positions 2294-2314 form an intramembrane region, helical; it reads GAAWTVYVGIVTMLSPMLHHW. Residues 2315–2360 lie on the Lumenal side of the membrane; that stretch reads IKVEYGNLSLSGIAQSASVLSFMDKGIPFMKMNISVVILLVSGWNS. The chain crosses the membrane as a helical span at residues 2361 to 2380; it reads ITVIPLLCGIGGAMLHWTLI. Topologically, residues 2381-2421 are cytoplasmic; it reads LPGIKAQQSKLAQKRVFHGVAKNPVVDGNPTADIEEAPEMP. Residues 2422–2442 form a helical membrane-spanning segment; the sequence is ALYEKKLALYLLLALSLMSVA. Over 2443–2445 the chain is Lumenal; that stretch reads MCR. Residues 2446-2466 form a helical membrane-spanning segment; sequence TPFSLAEGIVLSSAALGPLIE. Over 2467–3411 the chain is Cytoplasmic; that stretch reads GNTSLLWNGP…VDADLQPGEL (945 aa). An mRNA cap 0-1 NS5-type MT domain is found at 2508–2772; it reads GSASGKTLGE…DVILPIGTRS (265 aa). Ser2563 provides a ligand contact to S-adenosyl-L-methionine. Phosphoserine is present on Ser2563. The For 2'-O-MTase activity role is filled by Lys2568. Gly2593, Trp2594, Thr2611, Leu2612, Asp2638, and Val2639 together coordinate S-adenosyl-L-methionine. The For 2'-O-MTase activity role is filled by Asp2653. An S-adenosyl-L-methionine-binding site is contributed by Ile2654. Catalysis depends on for 2'-O-MTase activity residues Lys2689 and Glu2725. Tyr2727 contacts S-adenosyl-L-methionine. The Nuclear localization signal motif lies at 2879-2912; sequence RKIMKVVNRWLFRHLSREKNPRLCTKEEFIAKVR. Residues Glu2946, His2950, Cys2955, and Cys2958 each contribute to the Zn(2+) site. Residues 3036–3188 enclose the RdRp catalytic domain; it reads GGFYADDTAG…RPVDDRFGLA (153 aa). His3223, Cys3239, and Cys3358 together coordinate Zn(2+).

The protein in the N-terminal section; belongs to the class I-like SAM-binding methyltransferase superfamily. mRNA cap 0-1 NS5-type methyltransferase family. Homodimer. Interacts (via N-terminus) with host EXOC1 (via C-terminus); this interaction results in EXOC1 degradation through the proteasome degradation pathway. In terms of assembly, forms heterodimers with envelope protein E in the endoplasmic reticulum and Golgi. As to quaternary structure, homodimer; in the endoplasmic reticulum and Golgi. Interacts with protein prM. Interacts with non-structural protein 1. Homodimer; Homohexamer when secreted. Interacts with envelope protein E. In terms of assembly, interacts (via N-terminus) with serine protease NS3. As to quaternary structure, forms a heterodimer with serine protease NS3. May form homooligomers. Forms a heterodimer with NS2B. Interacts with non-structural protein 2A (via N-terminus). Interacts with NS4B. Interacts with unphosphorylated RNA-directed RNA polymerase NS5; this interaction stimulates RNA-directed RNA polymerase NS5 guanylyltransferase activity. NS3 interacts with host PDCD6IP; this interaction contributes to virion release. In terms of assembly, interacts with serine protease NS3. As to quaternary structure, homodimer. Interacts with host STAT2; this interaction prevents the establishment of cellular antiviral state. Interacts with serine protease NS3. Interacts with host TRIM23; this interaction leads to NS5 ubiquitination. Specific enzymatic cleavages in vivo yield mature proteins. The nascent capsid protein C contains a C-terminal hydrophobic domain that act as a signal sequence for translocation of prM into the lumen of the ER. Mature capsid protein C is cleaved at a site upstream of this hydrophobic domain by NS3. prM is cleaved in post-Golgi vesicles by a host furin, releasing the mature small envelope protein M, and peptide pr. Non-structural protein 2A-alpha, a C-terminally truncated form of non-structural protein 2A, results from partial cleavage by NS3. Specific enzymatic cleavages in vivo yield mature proteins peptide 2K acts as a signal sequence and is removed from the N-terminus of NS4B by the host signal peptidase in the ER lumen. Signal cleavage at the 2K-4B site requires a prior NS3 protease-mediated cleavage at the 4A-2K site. In terms of processing, cleaved in post-Golgi vesicles by a host furin, releasing the mature small envelope protein M, and peptide pr. This cleavage is incomplete as up to 30% of viral particles still carry uncleaved prM. Post-translationally, N-glycosylated. N-glycosylated. The excreted form is glycosylated and this is required for efficient secretion of the protein from infected cells. In terms of processing, polyubiquitinated; ubiquitination is probably mediated by host TRIM23 and is prerequisite for NS5-STAT2 interaction. NS5 is not ISGylated or sumoylated. Post-translationally, acetylated by host KAT5. Acetylation modulates NS3 RNA-binding and unwinding activities and plays an important positive role for viral replication. Phosphorylated on serines residues. This phosphorylation may trigger NS5 nuclear localization.

The protein resides in the virion. The protein localises to the host nucleus. It is found in the host cytoplasm. Its subcellular location is the host perinuclear region. It localises to the secreted. The protein resides in the virion membrane. The protein localises to the host endoplasmic reticulum membrane. The enzyme catalyses Selective hydrolysis of -Xaa-Xaa-|-Yaa- bonds in which each of the Xaa can be either Arg or Lys and Yaa can be either Ser or Ala.. It carries out the reaction RNA(n) + a ribonucleoside 5'-triphosphate = RNA(n+1) + diphosphate. It catalyses the reaction a ribonucleoside 5'-triphosphate + H2O = a ribonucleoside 5'-diphosphate + phosphate + H(+). The catalysed reaction is ATP + H2O = ADP + phosphate + H(+). The enzyme catalyses a 5'-end (5'-triphosphoguanosine)-ribonucleoside in mRNA + S-adenosyl-L-methionine = a 5'-end (N(7)-methyl 5'-triphosphoguanosine)-ribonucleoside in mRNA + S-adenosyl-L-homocysteine. It carries out the reaction a 5'-end (N(7)-methyl 5'-triphosphoguanosine)-ribonucleoside in mRNA + S-adenosyl-L-methionine = a 5'-end (N(7)-methyl 5'-triphosphoguanosine)-(2'-O-methyl-ribonucleoside) in mRNA + S-adenosyl-L-homocysteine + H(+). Functionally, plays a role in virus budding by binding to the cell membrane and gathering the viral RNA into a nucleocapsid that forms the core of a mature virus particle. During virus entry, may induce genome penetration into the host cytoplasm after hemifusion induced by the surface proteins. Can migrate to the cell nucleus where it modulates host functions. Inhibits RNA silencing by interfering with host Dicer. In terms of biological role, prevents premature fusion activity of envelope proteins in trans-Golgi by binding to envelope protein E at pH6.0. After virion release in extracellular space, gets dissociated from E dimers. Its function is as follows. Acts as a chaperone for envelope protein E during intracellular virion assembly by masking and inactivating envelope protein E fusion peptide. prM is the only viral peptide matured by host furin in the trans-Golgi network probably to avoid catastrophic activation of the viral fusion activity in acidic Golgi compartment prior to virion release. prM-E cleavage is inefficient, and many virions are only partially matured. These uncleaved prM would play a role in immune evasion. Functionally, may play a role in virus budding. Exerts cytotoxic effects by activating a mitochondrial apoptotic pathway through M ectodomain. May display a viroporin activity. Binds to host cell surface receptor and mediates fusion between viral and cellular membranes. Envelope protein is synthesized in the endoplasmic reticulum in the form of heterodimer with protein prM. They play a role in virion budding in the ER, and the newly formed immature particle is covered with 60 spikes composed of heterodimer between precursor prM and envelope protein E. The virion is transported to the Golgi apparatus where the low pH causes dissociation of PrM-E heterodimers and formation of E homodimers. prM-E cleavage is inefficient, and many virions are only partially matured. These uncleaved prM would play a role in immune evasion. In terms of biological role, involved in immune evasion, pathogenesis and viral replication. Once cleaved off the polyprotein, is targeted to three destinations: the viral replication cycle, the plasma membrane and the extracellular compartment. Essential for viral replication. Required for formation of the replication complex and recruitment of other non-structural proteins to the ER-derived membrane structures. Excreted as a hexameric lipoparticle that plays a role against host immune response. Antagonizing the complement function. Binds to the host macrophages and dendritic cells. Inhibits signal transduction originating from Toll-like receptor 3 (TLR3). Its function is as follows. Component of the viral RNA replication complex that functions in virion assembly and antagonizes the host immune response. Functionally, required cofactor for the serine protease function of NS3. May have membrane-destabilizing activity and form viroporins. Displays three enzymatic activities: serine protease, NTPase and RNA helicase. NS3 serine protease, in association with NS2B, performs its autocleavage and cleaves the polyprotein at dibasic sites in the cytoplasm: C-prM, NS2A-NS2B, NS2B-NS3, NS3-NS4A, NS4A-2K and NS4B-NS5. NS3 RNA helicase binds RNA and unwinds dsRNA in the 3' to 5' direction. Also plays a role in virus assembly. In terms of biological role, regulates the ATPase activity of the NS3 helicase activity. NS4A allows NS3 helicase to conserve energy during unwinding. Its function is as follows. Functions as a signal peptide for NS4B and is required for the interferon antagonism activity of the latter. Functionally, induces the formation of ER-derived membrane vesicles where the viral replication takes place. Inhibits interferon (IFN)-induced host STAT1 phosphorylation and nuclear translocation, thereby preventing the establishment of cellular antiviral state by blocking the IFN-alpha/beta pathway. Replicates the viral (+) and (-) RNA genome, and performs the capping of genomes in the cytoplasm. NS5 methylates viral RNA cap at guanine N-7 and ribose 2'-O positions. Besides its role in RNA genome replication, also prevents the establishment of cellular antiviral state by blocking the interferon-alpha/beta (IFN-alpha/beta) signaling pathway. IFN-I induces binding of NS5 to host IFN-activated transcription factor STAT2, preventing its transcriptional activity. Host TRIM23 is the E3 ligase that interacts with and polyubiquitinates NS5 to promote its binding to STAT2 and trigger IFN-I signaling inhibition. The protein is Genome polyprotein of Aedes aegypti (Yellowfever mosquito).